The sequence spans 250 residues: ATP synthase subunit a (250 aa).

6 consecutive transmembrane segments (helical) span residues 29 to 49, 84 to 104, 114 to 134, 143 to 163, 193 to 213, and 216 to 236; these read ASLF…FATS, FFPL…LGMF, IIVT…YGFY, VFVP…IEII, FVAS…LPLI, and VALT…FAVL.

The protein belongs to the ATPase A chain family. As to quaternary structure, F-type ATPases have 2 components, CF(1) - the catalytic core - and CF(0) - the membrane proton channel. CF(1) has five subunits: alpha(3), beta(3), gamma(1), delta(1), epsilon(1). CF(0) has three main subunits: a(1), b(2) and c(9-12). The alpha and beta chains form an alternating ring which encloses part of the gamma chain. CF(1) is attached to CF(0) by a central stalk formed by the gamma and epsilon chains, while a peripheral stalk is formed by the delta and b chains.

The protein localises to the cell inner membrane. Key component of the proton channel; it plays a direct role in the translocation of protons across the membrane. This Rhizobium leguminosarum bv. trifolii (strain WSM2304) protein is ATP synthase subunit a.